A 201-amino-acid polypeptide reads, in one-letter code: Putative 3-methyladenine DNA glycosylase (201 aa).

Belongs to the DNA glycosylase MPG family.

The protein is Putative 3-methyladenine DNA glycosylase of Clostridium novyi (strain NT).